The following is a 246-amino-acid chain: MADS-box transcription factor 14 (246 aa).

The MADS-box domain maps to 1–61; it reads MGRGKVQLKR…GKLYEYATDS (61 aa). The K-box domain maps to 88-178; the sequence is QGNWCHEYRK…QKELVEKQKV (91 aa). The interval 180–199 is disordered; sequence KQQVQWDQTQPQTSSSSSSF.

May interact with the K-box of MADS1 and MADS6. In terms of tissue distribution, highly expressed in sterile lemmas, at intermediate levels in stamens, and weakly in lemmas, paleas and carpels.

The protein localises to the nucleus. Its function is as follows. Probable transcription factor. May be involved in the control of flowering time. The protein is MADS-box transcription factor 14 (MADS14) of Oryza sativa subsp. japonica (Rice).